Reading from the N-terminus, the 374-residue chain is Phosphomevalonate kinase (374 aa).

It belongs to the GHMP kinase family. In terms of assembly, homodimer. Mg(2+) serves as cofactor.

The catalysed reaction is (R)-5-phosphomevalonate + ATP = (R)-5-diphosphomevalonate + ADP. The protein operates within isoprenoid biosynthesis; isopentenyl diphosphate biosynthesis via mevalonate pathway; isopentenyl diphosphate from (R)-mevalonate: step 2/3. Functionally, catalyzes the phosphorylation of (R)-mevalonate 5-phosphate (MVAP) to (R)-mevalonate 5-diphosphate (MVAPP). Functions in the mevalonate (MVA) pathway leading to isopentenyl diphosphate (IPP), a key precursor for the biosynthesis of isoprenoid compounds. This chain is Phosphomevalonate kinase, found in Streptomyces sp. (strain CL190).